Reading from the N-terminus, the 512-residue chain is Lysine--tRNA ligase (512 aa).

Mg(2+) is bound by residues E408 and E415.

It belongs to the class-II aminoacyl-tRNA synthetase family. In terms of assembly, homodimer. The cofactor is Mg(2+).

It localises to the cytoplasm. It carries out the reaction tRNA(Lys) + L-lysine + ATP = L-lysyl-tRNA(Lys) + AMP + diphosphate. The chain is Lysine--tRNA ligase from Prochlorococcus marinus subsp. pastoris (strain CCMP1986 / NIES-2087 / MED4).